The sequence spans 288 residues: UDP-3-O-acyl-N-acetylglucosamine deacetylase (288 aa).

Positions 79, 236, and 240 each coordinate Zn(2+). The active-site Proton donor is the His263.

Belongs to the LpxC family. The cofactor is Zn(2+).

The enzyme catalyses a UDP-3-O-[(3R)-3-hydroxyacyl]-N-acetyl-alpha-D-glucosamine + H2O = a UDP-3-O-[(3R)-3-hydroxyacyl]-alpha-D-glucosamine + acetate. The protein operates within glycolipid biosynthesis; lipid IV(A) biosynthesis; lipid IV(A) from (3R)-3-hydroxytetradecanoyl-[acyl-carrier-protein] and UDP-N-acetyl-alpha-D-glucosamine: step 2/6. In terms of biological role, catalyzes the hydrolysis of UDP-3-O-myristoyl-N-acetylglucosamine to form UDP-3-O-myristoylglucosamine and acetate, the committed step in lipid A biosynthesis. In Rickettsia prowazekii (strain Madrid E), this protein is UDP-3-O-acyl-N-acetylglucosamine deacetylase.